Reading from the N-terminus, the 272-residue chain is Phosphatidylglycerol--prolipoprotein diacylglyceryl transferase (272 aa).

A run of 4 helical transmembrane segments spans residues 16-36 (VGLH…LSSF), 62-82 (FALG…VLFY), 97-117 (IWKG…WAAV), and 129-149 (LSVT…ALLI). Residue Arg-150 participates in a 1,2-diacyl-sn-glycero-3-phospho-(1'-sn-glycerol) binding. 2 consecutive transmembrane segments (helical) span residues 206–226 (GVIR…VAVI) and 246–266 (ILTI…GIIW).

The protein belongs to the Lgt family.

It is found in the cell inner membrane. It carries out the reaction L-cysteinyl-[prolipoprotein] + a 1,2-diacyl-sn-glycero-3-phospho-(1'-sn-glycerol) = an S-1,2-diacyl-sn-glyceryl-L-cysteinyl-[prolipoprotein] + sn-glycerol 1-phosphate + H(+). It participates in protein modification; lipoprotein biosynthesis (diacylglyceryl transfer). In terms of biological role, catalyzes the transfer of the diacylglyceryl group from phosphatidylglycerol to the sulfhydryl group of the N-terminal cysteine of a prolipoprotein, the first step in the formation of mature lipoproteins. The polypeptide is Phosphatidylglycerol--prolipoprotein diacylglyceryl transferase (Chlamydia trachomatis serovar D (strain ATCC VR-885 / DSM 19411 / UW-3/Cx)).